Here is a 537-residue protein sequence, read N- to C-terminus: Proline--tRNA ligase (537 aa).

Belongs to the class-II aminoacyl-tRNA synthetase family. ProS type 3 subfamily. In terms of assembly, homodimer.

It is found in the cytoplasm. It catalyses the reaction tRNA(Pro) + L-proline + ATP = L-prolyl-tRNA(Pro) + AMP + diphosphate. Functionally, catalyzes the attachment of proline to tRNA(Pro) in a two-step reaction: proline is first activated by ATP to form Pro-AMP and then transferred to the acceptor end of tRNA(Pro). This Nanoarchaeum equitans (strain Kin4-M) protein is Proline--tRNA ligase.